The following is a 508-amino-acid chain: 3-octaprenyl-4-hydroxybenzoate carboxy-lyase (508 aa).

Residue Asn-172 participates in Mn(2+) binding. Prenylated FMN-binding positions include 175-177 (IYR), 189-191 (RWL), and 194-195 (RG). Glu-238 contacts Mn(2+). Asp-287 acts as the Proton donor in catalysis. The disordered stretch occupies residues 483-508 (GEYGIATPPPPPRHSPPSDERGHDDV). Positions 498–508 (PPSDERGHDDV) are enriched in basic and acidic residues.

The protein belongs to the UbiD family. As to quaternary structure, homohexamer. Prenylated FMN is required as a cofactor. The cofactor is Mn(2+).

It is found in the cell membrane. The catalysed reaction is a 4-hydroxy-3-(all-trans-polyprenyl)benzoate + H(+) = a 2-(all-trans-polyprenyl)phenol + CO2. The protein operates within cofactor biosynthesis; ubiquinone biosynthesis. In terms of biological role, catalyzes the decarboxylation of 3-octaprenyl-4-hydroxy benzoate to 2-octaprenylphenol, an intermediate step in ubiquinone biosynthesis. The sequence is that of 3-octaprenyl-4-hydroxybenzoate carboxy-lyase from Chromohalobacter salexigens (strain ATCC BAA-138 / DSM 3043 / CIP 106854 / NCIMB 13768 / 1H11).